The following is a 216-amino-acid chain: Redox-sensing transcriptional repressor Rex (216 aa).

Residues 16 to 55 (VYYRYLNVLLNANKHRVSSTELSEAVQVDSATIRRDFSYF) constitute a DNA-binding region (H-T-H motif). 90-95 (GVGSLG) is a binding site for NAD(+).

It belongs to the transcriptional regulatory Rex family. In terms of assembly, homodimer.

The protein localises to the cytoplasm. Functionally, modulates transcription in response to changes in cellular NADH/NAD(+) redox state. The chain is Redox-sensing transcriptional repressor Rex from Limosilactobacillus fermentum (strain NBRC 3956 / LMG 18251) (Lactobacillus fermentum).